The sequence spans 373 residues: Dof zinc finger protein 3 (373 aa).

Residues 1-23 (MASGGALSPVEEKPTVVKTTKAE) are disordered. The span at 10–23 (VEEKPTVVKTTKAE) shows a compositional bias: basic and acidic residues. The Dof-type zinc finger occupies 45–99 (PCCPRCNSIKTKFCYYNNYSMAQPRYFCRECRRYWTQGGSLRNVPVGGGCRKSKR). Positions 47, 50, 72, and 75 each coordinate Zn(2+). The disordered stretch occupies residues 297–327 (ALGGADEQQGGGDGGEAVMTKDTGGGASSSA).

As to quaternary structure, interacts with RISBZ1/BZIP58.

It localises to the nucleus. In terms of biological role, transcriptional activator that binds specifically to the DNA consensus core sequence 5'-AAAG-3' also known as prolamin box. Can activate the expression of genes encoding for the seed storage proteins glutelin, prolamin and globulin. Functions synergistically with RISBZ/BZIP58 to positively regulate quantitatively many seed storage proteins. Functions synergistically with RISBZ1/BZIP58 to positively regulate some metabolic enzymes, such as alanine aminotransferase and pyruvate phosphate dikinase, that are expressed in developing seeds. Functions synergistically with RISBZ1/BZIP58 to positively regulate genes that are key players in the development of aleurone layers. Functions synergistically with RISBZ1/BZIP58 to positively regulate the glutelin GLUD-1 gene in endosperm of developing seeds. Can activate the expression of the bifunctional lysine-degrading enzyme, lysine ketoglutarate reductase/saccharopine dehydrogenase (LKR/SDH), one of the key regulators determining free lysine content in plants. In germinating seeds, involved in the gibberellin-mediated activation of the alpha-amylase AMY1.1/AMY1A gene. The sequence is that of Dof zinc finger protein 3 from Oryza sativa subsp. japonica (Rice).